The primary structure comprises 49 residues: DCESGPCCDNCKFLKEGTICKMARGDNMHHYCNGKTCDCPRNPYKGEHD.

Residues 1–47 form the Disintegrin domain; that stretch reads DCESGPCCDNCKFLKEGTICKMARGDNMHHYCNGKTCDCPRNPYKGE. Intrachain disulfides connect cysteine 2/cysteine 11, cysteine 7/cysteine 32, cysteine 8/cysteine 37, and cysteine 20/cysteine 39. The Cell attachment site signature appears at 24-26; the sequence is RGD.

The protein belongs to the venom metalloproteinase (M12B) family. P-II subfamily. P-IIa sub-subfamily. Monomer. In terms of tissue distribution, expressed by the venom gland.

The protein resides in the secreted. Inhibits ADP-induced human platelet aggregation. This chain is Disintegrin ocellatin, found in Echis ocellatus (Ocellated saw-scaled viper).